The primary structure comprises 576 residues: Nuclear/nucleolar GTPase 2 (576 aa).

Disordered stretches follow at residues 1–61 and 166–186; these read MVKK…SNEY and QDAFEEKNGAGPSGEGGEEED. A compositionally biased stretch (basic and acidic residues) spans 16–34; that stretch reads HSLDANRADGKKKTTETRS. A compositionally biased stretch (basic residues) spans 42–52; sequence KMYKTRPKRNA. The CP-type G domain occupies 206-367; the sequence is WGELYKVIDS…LIDCPGVVYQ (162 aa). A DARXP motif motif is present at residues 224–228; that stretch reads DARDP. The G4 stretch occupies residues 254–257; that stretch reads NKCD. Residue 254–257 participates in GTP binding; the sequence is NKCD. Residues 283-285 are G5; it reads SVN. Positions 316 to 323 are G1; sequence GYPNVGKS. 319-324 is a GTP binding site; sequence NVGKSS. The interval 342–346 is G2; it reads GETKV. Positions 360-363 are G3; sequence DCPG. G363 contributes to the GTP binding site. A disordered region spans residues 502 to 576; the sequence is TQQQKDVPVQ…DEEDESDSAE (75 aa). The span at 509-530 shows a compositional bias: basic and acidic residues; sequence PVQRDFYDEKDLKDDKKAKEST. Positions 531–576 are enriched in acidic residues; that stretch reads ETDAENGTDAEEDEDAVSEDGVESDSDADEDAVSENDEEDESDSAE.

This sequence belongs to the TRAFAC class YlqF/YawG GTPase family. RsgA subfamily. Interacts with the 60S ribosomal proteins RPL10AA, RPL10AB and RPL10AC. In terms of tissue distribution, ubiquitous, with higher levels in meristematic regions.

The protein resides in the nucleus. It is found in the nucleolus. Its activity is regulated as follows. The GTPase activity is stimulated in the presence of the 60S ribosomal subunit. GTPase involved in pre-60S ribosomal subunit maturation. The polypeptide is Nuclear/nucleolar GTPase 2 (Arabidopsis thaliana (Mouse-ear cress)).